We begin with the raw amino-acid sequence, 868 residues long: Homeobox-leucine zipper protein HOX29 (868 aa).

The segment at residues 9-72 (DASKYVRYTP…NRRCREKQRK (64 aa)) is a DNA-binding region (homeobox). Residues 64-106 (RRCREKQRKESSRLQALNRKLTAMNKLLMEENDRLQKQVSQLV) are a coiled coil. The segment at 150–171 (VTSGHHHQQQQHNVVQPPPRDA) is disordered. The START domain occupies 169-397 (RDASPAGLMS…VAHEDTRSVI (229 aa)).

The protein belongs to the HD-ZIP homeobox family. Class III subfamily. In terms of tissue distribution, expressed in phloem.

The protein resides in the nucleus. Its function is as follows. Probable transcription factor that may be necessary for the proper patterning of vascular bundles. The polypeptide is Homeobox-leucine zipper protein HOX29 (HOX29) (Oryza sativa subsp. japonica (Rice)).